A 152-amino-acid polypeptide reads, in one-letter code: UPF0266 membrane protein Ent638_2389 (152 aa).

A run of 3 helical transmembrane segments spans residues 6–26, 45–65, and 67–87; these read IVLVLFIVALLAYAFYDEFIM, VDAFIFAGLLAILIYNNVMSQ, and ALLTTWLLCVLALMAFYLFWI.

This sequence belongs to the UPF0266 family.

It is found in the cell inner membrane. The sequence is that of UPF0266 membrane protein Ent638_2389 from Enterobacter sp. (strain 638).